Here is a 377-residue protein sequence, read N- to C-terminus: RIB43A-like with coiled-coils protein 2 (377 aa).

Coiled-coil stretches lie at residues 217-250 and 282-308; these read NKNQ…LRGD and EEIR…RDMD.

The protein belongs to the RIB43A family. Microtubule inner protein component of sperm flagellar doublet microtubules. In terms of tissue distribution, expressed in trachea multiciliated cells.

Its subcellular location is the cytoplasm. The protein resides in the cytoskeleton. The protein localises to the cilium axoneme. It is found in the flagellum axoneme. Functionally, microtubule inner protein (MIP) part of the dynein-decorated doublet microtubules (DMTs) in cilia axoneme, which is required for motile cilia beating. In Bos taurus (Bovine), this protein is RIB43A-like with coiled-coils protein 2.